The following is a 218-amino-acid chain: Large ribosomal subunit protein uL3 (218 aa).

Belongs to the universal ribosomal protein uL3 family. As to quaternary structure, part of the 50S ribosomal subunit. Forms a cluster with proteins L14 and L19.

Its function is as follows. One of the primary rRNA binding proteins, it binds directly near the 3'-end of the 23S rRNA, where it nucleates assembly of the 50S subunit. This chain is Large ribosomal subunit protein uL3, found in Corynebacterium aurimucosum (strain ATCC 700975 / DSM 44827 / CIP 107346 / CN-1) (Corynebacterium nigricans).